A 145-amino-acid polypeptide reads, in one-letter code: Large ribosomal subunit protein uL13 (145 aa).

Belongs to the universal ribosomal protein uL13 family. Part of the 50S ribosomal subunit.

Its function is as follows. This protein is one of the early assembly proteins of the 50S ribosomal subunit, although it is not seen to bind rRNA by itself. It is important during the early stages of 50S assembly. In Bacillus thuringiensis (strain Al Hakam), this protein is Large ribosomal subunit protein uL13.